Here is a 260-residue protein sequence, read N- to C-terminus: DNA repair protein RecO (260 aa).

This sequence belongs to the RecO family.

Functionally, involved in DNA repair and RecF pathway recombination. This is DNA repair protein RecO from Streptococcus suis (strain 98HAH33).